The following is a 652-amino-acid chain: MSIFRLSRTFSLETCLKSSSFKIRWRFFSVSYASRKLASEDNKPSIQEVVRGIPQNRVRNWAVIAHIDHGKSTLSDCILKLTGVINEHNFRNQFLDKLEVERRRGITVKAQTCSMIYYYHGQSYLLNLIDTPGHVDFRAEVMHSLAACEGCILLVDASQGIQAQTLSNFYMAFSQNLVIIPVLNKVDLPTADVDRTLIQVQQTFDIPMSKPILVSSKTGKNVEQILPEIIQKIPPPKGSENAPLRCLLIDSWYNSYQGVIGLVRIMEGFIKKGGKVMSVNTGRKYEVQQVGIMYPDMTEVSRLRAGQVGYIIWNMKNIDEAIVGDTYSTIGSNVEALPGFSIPQSMVYVGAFPLDGSDYERLNDNIEQLALNDRAINVQKENSSALGMGWRLGFLGTLHLSVFIDRLKDEYGKELLITSPTVPYRIKYKNGREEVISNPNLFPTNHQGISELLEPTVDATIITPSEYLGDVIKLCESCRGLQKDCTYMSESRCMIKYQLPLAHLVEDFFGRLKGTTSGFATLDYEESDYVPADLVRLSIFMSGKSVDALCSIVHRSLALQRGREWIQRLKPLVPKQLYEVILQAVIDNRVVARESISALRKNVTAKCYGGDVTRKQKLLNKQKEGKKRLKSVGNVSIDKSVFYEFLTKKQSN.

The N-terminal 44 residues, 1–44, are a transit peptide targeting the mitochondrion; that stretch reads MSIFRLSRTFSLETCLKSSSFKIRWRFFSVSYASRKLASEDNKP. The region spanning 56-237 is the tr-type G domain; it reads NRVRNWAVIA…EIIQKIPPPK (182 aa). GTP contacts are provided by residues 65 to 72, 130 to 134, and 184 to 187; these read AHIDHGKS, DTPGH, and NKVD.

This sequence belongs to the TRAFAC class translation factor GTPase superfamily. Classic translation factor GTPase family. LepA subfamily.

The protein localises to the mitochondrion inner membrane. The catalysed reaction is GTP + H2O = GDP + phosphate + H(+). In terms of biological role, promotes mitochondrial protein synthesis. May act as a fidelity factor of the translation reaction, by catalyzing a one-codon backward translocation of tRNAs on improperly translocated ribosomes. Binds to mitochondrial ribosomes in a GTP-dependent manner. This Schizosaccharomyces pombe (strain 972 / ATCC 24843) (Fission yeast) protein is Translation factor guf1, mitochondrial (guf1).